Consider the following 328-residue polypeptide: UPF0194 membrane protein YPTS_1292 (328 aa).

An N-terminal signal peptide occupies residues 1–22 (MNRKKIIVAAVIVALLATLAYG). Coiled coils occupy residues 80 to 109 (YLNALKQAQANVQSAQAQLALLKAGYREEE) and 142 to 209 (AVSA…ILLA).

This sequence belongs to the UPF0194 family.

It is found in the periplasm. This chain is UPF0194 membrane protein YPTS_1292, found in Yersinia pseudotuberculosis serotype IB (strain PB1/+).